Here is a 1163-residue protein sequence, read N- to C-terminus: Pesticidal crystal protein Cry26Aa (1163 aa).

Belongs to the delta endotoxin family.

Functionally, promotes colloidosmotic lysis by binding to the midgut epithelial cells of insects. The polypeptide is Pesticidal crystal protein Cry26Aa (cry26Aa) (Bacillus thuringiensis subsp. finitimus).